The following is a 409-amino-acid chain: F-box/kelch-repeat protein At2g44130 (409 aa).

The F-box domain occupies 17–63 (HELIPGLPSELALECLVRVPFQFQSAMRSVCRSWRSLLSDSSFIQER). 4 Kelch repeats span residues 98-148 (KKSE…VLQD), 151-199 (KILL…SVSP), 201-248 (KVYV…AVGM), and 251-300 (RFCV…RTAG).

The chain is F-box/kelch-repeat protein At2g44130 from Arabidopsis thaliana (Mouse-ear cress).